Here is a 396-residue protein sequence, read N- to C-terminus: Deoxyguanosinetriphosphate triphosphohydrolase-like protein (396 aa).

In terms of domain architecture, HD spans 62–198 (RLTHSLEVAQ…AALADDIAYN (137 aa)).

The protein belongs to the dGTPase family. Type 2 subfamily.

The protein is Deoxyguanosinetriphosphate triphosphohydrolase-like protein of Jannaschia sp. (strain CCS1).